The chain runs to 522 residues: Tryptophan 2-halogenase (522 aa).

Positions 17, 36, 42, 44, 45, 48, 103, 127, and 296 each coordinate FAD. Positions 307 and 308 each coordinate chloride. Valine 309 is a binding site for FAD.

The protein belongs to the flavin-dependent halogenase family.

Involved in the incorporation of a chlorinated tryptophan residue into halogenated forms of the secondary metabolites called chondramides. This chain is Tryptophan 2-halogenase, found in Chondromyces crocatus.